A 251-amino-acid chain; its full sequence is ATP synthase subunit a, chloroplastic (251 aa).

Helical transmembrane passes span 3–23 (IVLL…IANV), 38–58 (IHGQ…FLSI), 99–119 (VPYI…GALI), 138–158 (INTT…AGLN), 203–223 (LVVA…LIFL), and 224–244 (GLFT…SYIG).

Belongs to the ATPase A chain family. F-type ATPases have 2 components, CF(1) - the catalytic core - and CF(0) - the membrane proton channel. CF(1) has five subunits: alpha(3), beta(3), gamma(1), delta(1), epsilon(1). CF(0) has four main subunits: a, b, b' and c.

It localises to the plastid. Its subcellular location is the chloroplast thylakoid membrane. Its function is as follows. Key component of the proton channel; it plays a direct role in the translocation of protons across the membrane. The chain is ATP synthase subunit a, chloroplastic from Euglena gracilis.